The following is a 640-amino-acid chain: Chaperone protein HtpG (640 aa).

Residues 1–348 form an a; substrate-binding region; the sequence is MAQYKFETEV…SEDLPLNVSR (348 aa). Positions 349-565 are b; it reads EILQQNRILS…ETDPSLQMER (217 aa). The tract at residues 566-640 is c; that stretch reads MMRAMGQFNT…RLNRLMTNLK (75 aa).

This sequence belongs to the heat shock protein 90 family. Homodimer.

It localises to the cytoplasm. Its function is as follows. Molecular chaperone. Has ATPase activity. The polypeptide is Chaperone protein HtpG (Treponema denticola (strain ATCC 35405 / DSM 14222 / CIP 103919 / JCM 8153 / KCTC 15104)).